Here is a 156-residue protein sequence, read N- to C-terminus: Ribosomal RNA large subunit methyltransferase H (156 aa).

S-adenosyl-L-methionine-binding positions include Leu-73, Gly-104, and 123–128; that span reads IGPLTL.

Belongs to the RNA methyltransferase RlmH family. Homodimer.

The protein resides in the cytoplasm. The enzyme catalyses pseudouridine(1915) in 23S rRNA + S-adenosyl-L-methionine = N(3)-methylpseudouridine(1915) in 23S rRNA + S-adenosyl-L-homocysteine + H(+). Its function is as follows. Specifically methylates the pseudouridine at position 1915 (m3Psi1915) in 23S rRNA. This chain is Ribosomal RNA large subunit methyltransferase H, found in Xanthomonas euvesicatoria pv. vesicatoria (strain 85-10) (Xanthomonas campestris pv. vesicatoria).